A 357-amino-acid chain; its full sequence is Dihydroorotate dehydrogenase (quinone) (357 aa).

FMN contacts are provided by residues 65-69 (AGLDK) and threonine 89. Lysine 69 contributes to the substrate binding site. 114-118 (NRFGF) is a binding site for substrate. Residues asparagine 156 and asparagine 189 each contribute to the FMN site. Asparagine 189 provides a ligand contact to substrate. The active-site Nucleophile is the serine 192. Residue asparagine 194 coordinates substrate. 2 residues coordinate FMN: lysine 234 and threonine 262. Substrate is bound at residue 263–264 (NT). Residues glycine 285, glycine 314, and 335–336 (YT) each bind FMN.

The protein belongs to the dihydroorotate dehydrogenase family. Type 2 subfamily. In terms of assembly, monomer. It depends on FMN as a cofactor.

The protein localises to the cell membrane. The catalysed reaction is (S)-dihydroorotate + a quinone = orotate + a quinol. It functions in the pathway pyrimidine metabolism; UMP biosynthesis via de novo pathway; orotate from (S)-dihydroorotate (quinone route): step 1/1. Functionally, catalyzes the conversion of dihydroorotate to orotate with quinone as electron acceptor. The chain is Dihydroorotate dehydrogenase (quinone) from Albidiferax ferrireducens (strain ATCC BAA-621 / DSM 15236 / T118) (Rhodoferax ferrireducens).